Reading from the N-terminus, the 174-residue chain is Translation initiation factor IF-3 (174 aa).

Belongs to the IF-3 family. In terms of assembly, monomer.

It is found in the cytoplasm. IF-3 binds to the 30S ribosomal subunit and shifts the equilibrium between 70S ribosomes and their 50S and 30S subunits in favor of the free subunits, thus enhancing the availability of 30S subunits on which protein synthesis initiation begins. In Azorhizobium caulinodans (strain ATCC 43989 / DSM 5975 / JCM 20966 / LMG 6465 / NBRC 14845 / NCIMB 13405 / ORS 571), this protein is Translation initiation factor IF-3.